Here is a 165-residue protein sequence, read N- to C-terminus: NADPH-dependent 7-cyano-7-deazaguanine reductase (165 aa).

The active-site Thioimide intermediate is the Cys56. The Proton donor role is filled by Asp63. Residues 78–80 (VES) and 97–98 (HE) each bind substrate.

Belongs to the GTP cyclohydrolase I family. QueF type 1 subfamily.

It is found in the cytoplasm. It catalyses the reaction 7-aminomethyl-7-carbaguanine + 2 NADP(+) = 7-cyano-7-deazaguanine + 2 NADPH + 3 H(+). It functions in the pathway tRNA modification; tRNA-queuosine biosynthesis. In terms of biological role, catalyzes the NADPH-dependent reduction of 7-cyano-7-deazaguanine (preQ0) to 7-aminomethyl-7-deazaguanine (preQ1). This is NADPH-dependent 7-cyano-7-deazaguanine reductase from Bacillus licheniformis (strain ATCC 14580 / DSM 13 / JCM 2505 / CCUG 7422 / NBRC 12200 / NCIMB 9375 / NCTC 10341 / NRRL NRS-1264 / Gibson 46).